Consider the following 914-residue polypeptide: DNA mismatch repair protein MutS (914 aa).

The interval 28-74 (NTNSVKDSNLNDEELSKNAELRPRKRKKSVLLQNSVGEQTEDFSNDE) is disordered. Residue 726–733 (GPNASGKS) coordinates ATP.

It belongs to the DNA mismatch repair MutS family.

Its function is as follows. This protein is involved in the repair of mismatches in DNA. It is possible that it carries out the mismatch recognition step. This protein has a weak ATPase activity. The protein is DNA mismatch repair protein MutS of Prochlorococcus marinus (strain SARG / CCMP1375 / SS120).